Consider the following 430-residue polypeptide: Enolase (430 aa).

Glutamine 163 is a binding site for (2R)-2-phosphoglycerate. The active-site Proton donor is glutamate 205. Positions 242, 288, and 315 each coordinate Mg(2+). 4 residues coordinate (2R)-2-phosphoglycerate: lysine 340, arginine 369, serine 370, and lysine 391. Lysine 340 serves as the catalytic Proton acceptor.

The protein belongs to the enolase family. It depends on Mg(2+) as a cofactor.

The protein localises to the cytoplasm. The protein resides in the secreted. It localises to the cell surface. The catalysed reaction is (2R)-2-phosphoglycerate = phosphoenolpyruvate + H2O. It participates in carbohydrate degradation; glycolysis; pyruvate from D-glyceraldehyde 3-phosphate: step 4/5. Its function is as follows. Catalyzes the reversible conversion of 2-phosphoglycerate (2-PG) into phosphoenolpyruvate (PEP). It is essential for the degradation of carbohydrates via glycolysis. This is Enolase from Phytoplasma australiense.